The chain runs to 229 residues: 3-dehydroquinate dehydratase (229 aa).

Residues 33–35 and arginine 65 contribute to the 3-dehydroquinate site; that span reads EWR. Histidine 121 acts as the Proton donor/acceptor in catalysis. Lysine 146 functions as the Schiff-base intermediate with substrate in the catalytic mechanism. 3-dehydroquinate is bound by residues arginine 188, serine 207, and glutamine 211.

It belongs to the type-I 3-dehydroquinase family. Homodimer.

The enzyme catalyses 3-dehydroquinate = 3-dehydroshikimate + H2O. It participates in metabolic intermediate biosynthesis; chorismate biosynthesis; chorismate from D-erythrose 4-phosphate and phosphoenolpyruvate: step 3/7. Involved in the third step of the chorismate pathway, which leads to the biosynthesis of aromatic amino acids. Catalyzes the cis-dehydration of 3-dehydroquinate (DHQ) and introduces the first double bond of the aromatic ring to yield 3-dehydroshikimate. This Lactococcus lactis subsp. cremoris (strain MG1363) protein is 3-dehydroquinate dehydratase.